The sequence spans 60 residues: Colanic acid capsular biosynthesis activation protein B (60 aa).

The chain is Colanic acid capsular biosynthesis activation protein B (rcsB) from Klebsiella aerogenes (Enterobacter aerogenes).